Consider the following 334-residue polypeptide: Lipoyl synthase (334 aa).

Positions 71, 76, 82, 97, 101, 104, and 312 each coordinate [4Fe-4S] cluster. The region spanning 83 to 301 (WSHGTATFMV…RQEGLRRGFR (219 aa)) is the Radical SAM core domain.

The protein belongs to the radical SAM superfamily. Lipoyl synthase family. Requires [4Fe-4S] cluster as cofactor.

The protein localises to the cytoplasm. It catalyses the reaction [[Fe-S] cluster scaffold protein carrying a second [4Fe-4S](2+) cluster] + N(6)-octanoyl-L-lysyl-[protein] + 2 oxidized [2Fe-2S]-[ferredoxin] + 2 S-adenosyl-L-methionine + 4 H(+) = [[Fe-S] cluster scaffold protein] + N(6)-[(R)-dihydrolipoyl]-L-lysyl-[protein] + 4 Fe(3+) + 2 hydrogen sulfide + 2 5'-deoxyadenosine + 2 L-methionine + 2 reduced [2Fe-2S]-[ferredoxin]. The protein operates within protein modification; protein lipoylation via endogenous pathway; protein N(6)-(lipoyl)lysine from octanoyl-[acyl-carrier-protein]: step 2/2. Catalyzes the radical-mediated insertion of two sulfur atoms into the C-6 and C-8 positions of the octanoyl moiety bound to the lipoyl domains of lipoate-dependent enzymes, thereby converting the octanoylated domains into lipoylated derivatives. This Halorhodospira halophila (strain DSM 244 / SL1) (Ectothiorhodospira halophila (strain DSM 244 / SL1)) protein is Lipoyl synthase.